A 322-amino-acid polypeptide reads, in one-letter code: Ribose-phosphate pyrophosphokinase (322 aa).

ATP contacts are provided by residues 43-45 (DGE) and 102-103 (RQ). Residues histidine 137 and aspartate 177 each contribute to the Mg(2+) site. The active site involves lysine 201. D-ribose 5-phosphate is bound by residues arginine 203, aspartate 227, and 231–235 (DTAGT).

The protein belongs to the ribose-phosphate pyrophosphokinase family. Class I subfamily. As to quaternary structure, homohexamer. Requires Mg(2+) as cofactor.

Its subcellular location is the cytoplasm. It catalyses the reaction D-ribose 5-phosphate + ATP = 5-phospho-alpha-D-ribose 1-diphosphate + AMP + H(+). Its pathway is metabolic intermediate biosynthesis; 5-phospho-alpha-D-ribose 1-diphosphate biosynthesis; 5-phospho-alpha-D-ribose 1-diphosphate from D-ribose 5-phosphate (route I): step 1/1. Functionally, involved in the biosynthesis of the central metabolite phospho-alpha-D-ribosyl-1-pyrophosphate (PRPP) via the transfer of pyrophosphoryl group from ATP to 1-hydroxyl of ribose-5-phosphate (Rib-5-P). The chain is Ribose-phosphate pyrophosphokinase from Xylella fastidiosa (strain 9a5c).